A 43-amino-acid chain; its full sequence is METATLVTISISCLLVSFTGYALYTAFGQPSKQLRDPFEDHED.

A helical membrane pass occupies residues 5–27; sequence TLVTISISCLLVSFTGYALYTAF.

Belongs to the PsbN family.

It localises to the plastid. The protein resides in the chloroplast thylakoid membrane. In terms of biological role, may play a role in photosystem I and II biogenesis. The sequence is that of Protein PsbN from Pinus koraiensis (Korean pine).